The following is a 391-amino-acid chain: Homocysteine-responsive endoplasmic reticulum-resident ubiquitin-like domain member 1 protein (391 aa).

M1 bears the N-acetylmethionine mark. Topologically, residues 1-263 are cytoplasmic; it reads MESETEPEPV…VEEDDEINRD (263 aa). Residues 10-72 enclose the Ubiquitin-like domain; sequence VTLLVKSPNQ…LLDHQCLRDL (63 aa). A disordered region spans residues 100 to 126; that stretch reads KVAESTEEPAGSNRGQYPEDSSSDGLR. Polar residues predominate over residues 112 to 124; the sequence is NRGQYPEDSSSDG. The interval 115-200 is interaction with UBQLN1; it reads QYPEDSSSDG…ASGAFVPPPS (86 aa). S135 is subject to Phosphoserine. A helical transmembrane segment spans residues 264–284; it reads WLDWTYSAATFSVFLSILYFY. Residues 285–289 are Lumenal-facing; the sequence is SSLSR. The helical transmembrane segment at 290 to 310 threads the bilayer; that stretch reads FLMVMGATVVMYLHHVGWFPF. The Cytoplasmic segment spans residues 311 to 391; sequence RPRPVQNFPN…LPEGPPAIAN (81 aa). Positions 318–359 are disordered; sequence FPNDGPPPDIVNQDPNNNLQEGTDPETEDPNHVPPDRGVLDG. Positions 346–357 are enriched in basic and acidic residues; it reads DPNHVPPDRGVL.

In terms of assembly, interacts with PSEN1 and PSEN2. Interacts with UBXN6. Interacts with UBQLN1, UBQLN2 and UBQLN4. Component of the HRD1 complex, which comprises at least SYNV1/HRD1, FAM8A1, HERPUD1/HERP, OS9, SEL1L and UBE2J1. FAM8A1 binding to SYNV1 may promote recruitment of HERPUD1 to the HRD1 complex.

It localises to the endoplasmic reticulum membrane. Functionally, component of the endoplasmic reticulum quality control (ERQC) system also called ER-associated degradation (ERAD) involved in ubiquitin-dependent degradation of misfolded endoplasmic reticulum proteins. Binds to ubiquilins and this interaction is required for efficient degradation of CD3D via the ERAD pathway. In Pongo abelii (Sumatran orangutan), this protein is Homocysteine-responsive endoplasmic reticulum-resident ubiquitin-like domain member 1 protein (HERPUD1).